A 233-amino-acid chain; its full sequence is Adenosine 5'-phosphosulfate reductase (233 aa).

[4Fe-4S] cluster is bound by residues cysteine 120, cysteine 121, cysteine 203, and cysteine 206. The active-site Nucleophile; cysteine thiosulfonate intermediate is cysteine 229.

Belongs to the PAPS reductase family. CysH subfamily. The cofactor is [4Fe-4S] cluster.

The protein localises to the cytoplasm. It carries out the reaction [thioredoxin]-disulfide + sulfite + AMP + 2 H(+) = adenosine 5'-phosphosulfate + [thioredoxin]-dithiol. It participates in sulfur metabolism; hydrogen sulfide biosynthesis; sulfite from sulfate. Catalyzes the formation of sulfite from adenosine 5'-phosphosulfate (APS) using thioredoxin as an electron donor. In Bacillus velezensis (strain DSM 23117 / BGSC 10A6 / LMG 26770 / FZB42) (Bacillus amyloliquefaciens subsp. plantarum), this protein is Adenosine 5'-phosphosulfate reductase.